A 506-amino-acid chain; its full sequence is Anaerobic nitric oxide reductase transcription regulator NorR (506 aa).

The residue at position 57 (Asp57) is a 4-aspartylphosphate. Residues Met187–Val416 form the Sigma-54 factor interaction domain. ATP is bound by residues Gly215 to Glu222 and Ala278 to Glu287. Residues Trp481–Lys500 constitute a DNA-binding region (H-T-H motif).

It functions in the pathway nitrogen metabolism; nitric oxide reduction. Required for the expression of anaerobic nitric oxide (NO) reductase, acts as a transcriptional activator for at least the norVW operon. Activation also requires sigma-54. The protein is Anaerobic nitric oxide reductase transcription regulator NorR of Salmonella dublin (strain CT_02021853).